An 829-amino-acid polypeptide reads, in one-letter code: Protein SEY1 homolog 2 (829 aa).

The segment at 1-21 is disordered; the sequence is MDEVSPTKHFTSKPLLPTKTP. The Cytoplasmic portion of the chain corresponds to 1-728; it reads MDEVSPTKHF…EKENSEIKYQ (728 aa). Residues 83 to 305 enclose the GB1/RHD3-type G domain; it reads GMDYNAVGIL…FLPQYNKEIP (223 aa). A GTP-binding site is contributed by 93–100; the sequence is GAQSSGKS. 2 coiled-coil regions span residues 372–396 and 576–596; these read KKIM…YMES and DTIE…IKEL. The helical transmembrane segment at 729 to 749 threads the bilayer; the sequence is IPLYLIVLVIFFGFDEFIAIL. The Lumenal segment spans residues 750 to 752; it reads TNP. A helical membrane pass occupies residues 753–773; it reads LLFILTLIIGGGIYIGYKLNL. The Cytoplasmic segment spans residues 774–829; the sequence is GGVAKNYIQYLLSMSLSSTMEYLRTIPFFTPLIDKIWPKDDNKDDDSTEETQEETK.

It belongs to the TRAFAC class dynamin-like GTPase superfamily. GB1/RHD3 GTPase family. RHD3 subfamily.

Its subcellular location is the endoplasmic reticulum membrane. Its function is as follows. Probable GTP-binding protein that may be involved in cell development. The polypeptide is Protein SEY1 homolog 2 (Entamoeba dispar (strain ATCC PRA-260 / SAW760)).